We begin with the raw amino-acid sequence, 201 residues long: Holliday junction branch migration complex subunit RuvA (201 aa).

Positions M1–A64 are domain I. The interval S65–G143 is domain II. A flexible linker region spans residues G144–A153. A domain III region spans residues A153–K201.

The protein belongs to the RuvA family. Homotetramer. Forms an RuvA(8)-RuvB(12)-Holliday junction (HJ) complex. HJ DNA is sandwiched between 2 RuvA tetramers; dsDNA enters through RuvA and exits via RuvB. An RuvB hexamer assembles on each DNA strand where it exits the tetramer. Each RuvB hexamer is contacted by two RuvA subunits (via domain III) on 2 adjacent RuvB subunits; this complex drives branch migration. In the full resolvosome a probable DNA-RuvA(4)-RuvB(12)-RuvC(2) complex forms which resolves the HJ.

Its subcellular location is the cytoplasm. In terms of biological role, the RuvA-RuvB-RuvC complex processes Holliday junction (HJ) DNA during genetic recombination and DNA repair, while the RuvA-RuvB complex plays an important role in the rescue of blocked DNA replication forks via replication fork reversal (RFR). RuvA specifically binds to HJ cruciform DNA, conferring on it an open structure. The RuvB hexamer acts as an ATP-dependent pump, pulling dsDNA into and through the RuvAB complex. HJ branch migration allows RuvC to scan DNA until it finds its consensus sequence, where it cleaves and resolves the cruciform DNA. This chain is Holliday junction branch migration complex subunit RuvA, found in Thioalkalivibrio sulfidiphilus (strain HL-EbGR7).